A 209-amino-acid chain; its full sequence is ATP phosphoribosyltransferase (209 aa).

The protein belongs to the ATP phosphoribosyltransferase family. Short subfamily. In terms of assembly, heteromultimer composed of HisG and HisZ subunits.

It is found in the cytoplasm. The enzyme catalyses 1-(5-phospho-beta-D-ribosyl)-ATP + diphosphate = 5-phospho-alpha-D-ribose 1-diphosphate + ATP. Its pathway is amino-acid biosynthesis; L-histidine biosynthesis; L-histidine from 5-phospho-alpha-D-ribose 1-diphosphate: step 1/9. In terms of biological role, catalyzes the condensation of ATP and 5-phosphoribose 1-diphosphate to form N'-(5'-phosphoribosyl)-ATP (PR-ATP). Has a crucial role in the pathway because the rate of histidine biosynthesis seems to be controlled primarily by regulation of HisG enzymatic activity. The chain is ATP phosphoribosyltransferase from Caldicellulosiruptor saccharolyticus (strain ATCC 43494 / DSM 8903 / Tp8T 6331).